The chain runs to 238 residues: Large ribosomal subunit protein uL2 (238 aa).

Disordered stretches follow at residues 1 to 34 (MGKR…PPLS) and 197 to 238 (VDHP…RRKR). Positions 224-238 (KVGHIAARRTGRRKR) are enriched in basic residues.

The protein belongs to the universal ribosomal protein uL2 family. As to quaternary structure, part of the 50S ribosomal subunit. Forms a bridge to the 30S subunit in the 70S ribosome.

In terms of biological role, one of the primary rRNA binding proteins. Required for association of the 30S and 50S subunits to form the 70S ribosome, for tRNA binding and peptide bond formation. It has been suggested to have peptidyltransferase activity; this is somewhat controversial. Makes several contacts with the 16S rRNA in the 70S ribosome. The sequence is that of Large ribosomal subunit protein uL2 from Aeropyrum pernix (strain ATCC 700893 / DSM 11879 / JCM 9820 / NBRC 100138 / K1).